The primary structure comprises 137 residues: Large-conductance mechanosensitive channel (137 aa).

2 helical membrane-spanning segments follow: residues 10–30 (FAMR…AAFG) and 76–96 (GVFI…FVAI).

It belongs to the MscL family. In terms of assembly, homopentamer.

It is found in the cell inner membrane. In terms of biological role, channel that opens in response to stretch forces in the membrane lipid bilayer. May participate in the regulation of osmotic pressure changes within the cell. This Salmonella typhimurium (strain LT2 / SGSC1412 / ATCC 700720) protein is Large-conductance mechanosensitive channel.